The primary structure comprises 486 residues: Ribulose bisphosphate carboxylase large chain (486 aa).

Asn-125 and Thr-175 together coordinate substrate. Lys-177 functions as the Proton acceptor in the catalytic mechanism. Substrate is bound at residue Lys-179. Lys-203, Asp-205, and Glu-206 together coordinate Mg(2+). At Lys-203 the chain carries N6-carboxylysine. Residue His-295 is the Proton acceptor of the active site. Residues Arg-296, His-328, and Ser-380 each contribute to the substrate site.

The protein belongs to the RuBisCO large chain family. Type I subfamily. As to quaternary structure, heterohexadecamer of 8 large chains and 8 small chains. Mg(2+) is required as a cofactor.

The catalysed reaction is 2 (2R)-3-phosphoglycerate + 2 H(+) = D-ribulose 1,5-bisphosphate + CO2 + H2O. The enzyme catalyses D-ribulose 1,5-bisphosphate + O2 = 2-phosphoglycolate + (2R)-3-phosphoglycerate + 2 H(+). Its function is as follows. RuBisCO catalyzes two reactions: the carboxylation of D-ribulose 1,5-bisphosphate, the primary event in carbon dioxide fixation, as well as the oxidative fragmentation of the pentose substrate. Both reactions occur simultaneously and in competition at the same active site. In Bradyrhizobium diazoefficiens (strain JCM 10833 / BCRC 13528 / IAM 13628 / NBRC 14792 / USDA 110), this protein is Ribulose bisphosphate carboxylase large chain.